The sequence spans 674 residues: DNA ligase (674 aa).

Residues aspartate 35–aspartate 39, serine 84–leucine 85, and glutamate 118 contribute to the NAD(+) site. The N6-AMP-lysine intermediate role is filled by lysine 120. NAD(+) is bound by residues arginine 141, glutamate 184, lysine 297, and lysine 321. Residues cysteine 415, cysteine 418, cysteine 433, and cysteine 439 each coordinate Zn(2+). The BRCT domain occupies glutamine 598–leucine 674.

This sequence belongs to the NAD-dependent DNA ligase family. LigA subfamily. The cofactor is Mg(2+). Mn(2+) serves as cofactor.

It carries out the reaction NAD(+) + (deoxyribonucleotide)n-3'-hydroxyl + 5'-phospho-(deoxyribonucleotide)m = (deoxyribonucleotide)n+m + AMP + beta-nicotinamide D-nucleotide.. Its function is as follows. DNA ligase that catalyzes the formation of phosphodiester linkages between 5'-phosphoryl and 3'-hydroxyl groups in double-stranded DNA using NAD as a coenzyme and as the energy source for the reaction. It is essential for DNA replication and repair of damaged DNA. In Pelodictyon phaeoclathratiforme (strain DSM 5477 / BU-1), this protein is DNA ligase.